Consider the following 824-residue polypeptide: ABC transporter B family member 7 (824 aa).

Positions 41 to 101 (RNSVKFNLDT…NKNNKNKINN (61 aa)) are disordered. Residues 63-101 (NNNKNNNNNNNNNNNNNNNNNNNNNNNNNNKNNKNKINN) are compositionally biased toward low complexity. 6 helical membrane passes run 164-184 (IWYF…QLAL), 252-272 (WIII…LLFT), 325-345 (LSTL…LVFL), 347-367 (WKVT…FLVF), 431-451 (AFWI…IYGF), and 461-481 (ILLL…NGLI). The ABC transmembrane type-1 domain occupies 167–489 (FVFAFLALSI…LIGSINEIQK (323 aa)). One can recognise an ABC transporter domain in the interval 521–767 (ISFDNVYFNN…STSFYVTSVL (247 aa)). ATP is bound at residue 570 to 576 (GPSQSKE). Residues 772 to 813 (NKYNNNNNNNNNNNNNNNNNNNNNNNNNNNNNNNNNNNNINN) form a disordered region.

It belongs to the ABC transporter superfamily. ABCB family.

The protein localises to the membrane. In Dictyostelium discoideum (Social amoeba), this protein is ABC transporter B family member 7 (abcB7).